The primary structure comprises 435 residues: ATP-dependent protease ATPase subunit HslU (435 aa).

ATP is bound by residues Val18, 60-65, Asp248, Glu313, and Arg385; that span reads GVGKTE.

The protein belongs to the ClpX chaperone family. HslU subfamily. In terms of assembly, a double ring-shaped homohexamer of HslV is capped on each side by a ring-shaped HslU homohexamer. The assembly of the HslU/HslV complex is dependent on binding of ATP.

Its subcellular location is the cytoplasm. Its function is as follows. ATPase subunit of a proteasome-like degradation complex; this subunit has chaperone activity. The binding of ATP and its subsequent hydrolysis by HslU are essential for unfolding of protein substrates subsequently hydrolyzed by HslV. HslU recognizes the N-terminal part of its protein substrates and unfolds these before they are guided to HslV for hydrolysis. This Xanthobacter autotrophicus (strain ATCC BAA-1158 / Py2) protein is ATP-dependent protease ATPase subunit HslU.